The following is a 482-amino-acid chain: tRNA sulfurtransferase (482 aa).

Positions 61–165 (SAIRDALTRI…QDRLLLIKGR (105 aa)) constitute a THUMP domain. ATP-binding positions include 183 to 184 (LI), K265, G287, and Q296. A disulfide bond links C344 and C456. In terms of domain architecture, Rhodanese spans 404 to 482 (FAPTDVLLDI…GFSNVKVYRP (79 aa)). C456 functions as the Cysteine persulfide intermediate in the catalytic mechanism.

This sequence belongs to the ThiI family.

It localises to the cytoplasm. The catalysed reaction is [ThiI sulfur-carrier protein]-S-sulfanyl-L-cysteine + a uridine in tRNA + 2 reduced [2Fe-2S]-[ferredoxin] + ATP + H(+) = [ThiI sulfur-carrier protein]-L-cysteine + a 4-thiouridine in tRNA + 2 oxidized [2Fe-2S]-[ferredoxin] + AMP + diphosphate. It carries out the reaction [ThiS sulfur-carrier protein]-C-terminal Gly-Gly-AMP + S-sulfanyl-L-cysteinyl-[cysteine desulfurase] + AH2 = [ThiS sulfur-carrier protein]-C-terminal-Gly-aminoethanethioate + L-cysteinyl-[cysteine desulfurase] + A + AMP + 2 H(+). Its pathway is cofactor biosynthesis; thiamine diphosphate biosynthesis. Its function is as follows. Catalyzes the ATP-dependent transfer of a sulfur to tRNA to produce 4-thiouridine in position 8 of tRNAs, which functions as a near-UV photosensor. Also catalyzes the transfer of sulfur to the sulfur carrier protein ThiS, forming ThiS-thiocarboxylate. This is a step in the synthesis of thiazole, in the thiamine biosynthesis pathway. The sulfur is donated as persulfide by IscS. This is tRNA sulfurtransferase from Pectobacterium carotovorum subsp. carotovorum (strain PC1).